Here is a 573-residue protein sequence, read N- to C-terminus: 2-succinyl-5-enolpyruvyl-6-hydroxy-3-cyclohexene-1-carboxylate synthase (573 aa).

It belongs to the TPP enzyme family. MenD subfamily. In terms of assembly, homodimer. Requires Mg(2+) as cofactor. Mn(2+) serves as cofactor. Thiamine diphosphate is required as a cofactor.

The catalysed reaction is isochorismate + 2-oxoglutarate + H(+) = 5-enolpyruvoyl-6-hydroxy-2-succinyl-cyclohex-3-ene-1-carboxylate + CO2. It functions in the pathway quinol/quinone metabolism; 1,4-dihydroxy-2-naphthoate biosynthesis; 1,4-dihydroxy-2-naphthoate from chorismate: step 2/7. It participates in quinol/quinone metabolism; menaquinone biosynthesis. In terms of biological role, catalyzes the thiamine diphosphate-dependent decarboxylation of 2-oxoglutarate and the subsequent addition of the resulting succinic semialdehyde-thiamine pyrophosphate anion to isochorismate to yield 2-succinyl-5-enolpyruvyl-6-hydroxy-3-cyclohexene-1-carboxylate (SEPHCHC). This is 2-succinyl-5-enolpyruvyl-6-hydroxy-3-cyclohexene-1-carboxylate synthase from Shewanella putrefaciens (strain CN-32 / ATCC BAA-453).